The following is a 114-amino-acid chain: Hydrogenase maturation factor HypA (114 aa).

His-2 contributes to the Ni(2+) binding site. Zn(2+)-binding residues include Cys-73, Cys-76, Cys-89, and Cys-92.

The protein belongs to the HypA/HybF family.

Functionally, involved in the maturation of [NiFe] hydrogenases. Required for nickel insertion into the metal center of the hydrogenase. This is Hydrogenase maturation factor HypA from Syntrophus aciditrophicus (strain SB).